The chain runs to 334 residues: Lipoyl synthase (334 aa).

The disordered stretch occupies residues 1-36 (MSDALIAPNASSSEAPQSPAEHYDPTRKQKSADKTA). The segment covering 7–20 (APNASSSEAPQSPA) has biased composition (low complexity). The segment covering 21-36 (EHYDPTRKQKSADKTA) has biased composition (basic and acidic residues). [4Fe-4S] cluster-binding residues include Cys81, Cys86, Cys92, Cys107, Cys111, Cys114, and Ser321. Residues 92–310 (CFGKGTATFM…EEEAYKMGFT (219 aa)) enclose the Radical SAM core domain.

Belongs to the radical SAM superfamily. Lipoyl synthase family. The cofactor is [4Fe-4S] cluster.

It localises to the cytoplasm. The enzyme catalyses [[Fe-S] cluster scaffold protein carrying a second [4Fe-4S](2+) cluster] + N(6)-octanoyl-L-lysyl-[protein] + 2 oxidized [2Fe-2S]-[ferredoxin] + 2 S-adenosyl-L-methionine + 4 H(+) = [[Fe-S] cluster scaffold protein] + N(6)-[(R)-dihydrolipoyl]-L-lysyl-[protein] + 4 Fe(3+) + 2 hydrogen sulfide + 2 5'-deoxyadenosine + 2 L-methionine + 2 reduced [2Fe-2S]-[ferredoxin]. Its pathway is protein modification; protein lipoylation via endogenous pathway; protein N(6)-(lipoyl)lysine from octanoyl-[acyl-carrier-protein]: step 2/2. Catalyzes the radical-mediated insertion of two sulfur atoms into the C-6 and C-8 positions of the octanoyl moiety bound to the lipoyl domains of lipoate-dependent enzymes, thereby converting the octanoylated domains into lipoylated derivatives. This Cupriavidus taiwanensis (strain DSM 17343 / BCRC 17206 / CCUG 44338 / CIP 107171 / LMG 19424 / R1) (Ralstonia taiwanensis (strain LMG 19424)) protein is Lipoyl synthase.